The sequence spans 345 residues: Peptidoglycan-recognition protein LE (345 aa).

The span at 1–16 (MSESGIKKLSQERTRE) shows a compositional bias: basic and acidic residues. The interval 1 to 38 (MSESGIKKLSQERTREWLASQEDEELESIAESSVVDSL) is disordered. Residues Asn52, Asn95, Asn98, and Asn106 are each glycosylated (N-linked (GlcNAc...) asparagine). The interval 124–152 (NRRDRRHVSPPRDNAPKTPTHFEDDYQDE) is disordered. Residues 198 to 324 (PVKYVVILHT…CQCNSTESPG (127 aa)) enclose the N-acetylmuramoyl-L-alanine amidase domain. Residues His206, 229–240 (HIESRGWNDIAY), Arg254, 261–267 (AHTLGYN), and 314–322 (HCQCNSTES) each bind peptidoglycan. N-linked (GlcNAc...) asparagine glycosylation is present at Asn318.

The protein belongs to the N-acetylmuramoyl-L-alanine amidase 2 family. In terms of assembly, monomer. Peptidoglycan binding induces oligomerization. Expressed in hemolymph. Localizes at the lumenal surface of the trachea (at protein level).

It localises to the secreted. Peptidoglycan-recognition protein that plays a key role in innate immunity by binding to murein peptidoglycans (PGN) of Gram-negative bacteria and activating the imd/Relish pathway. Has no activity against on Gram-positive bacteria. Binds to diaminopimelic acid-type PGN (DAP-type PGN), an activator of the imd/Relish pathway. Functions synergistically with PGRP-LC in producing resistance to E.coli and B.megaterium infections, which have the DAP-type peptidoglycan. Acts both upstream and in parallel with PGRP-LC in the imd/Relish pathway, and is required for infection-dependent activation of melanization. Required for Relish processing and nuclear translocation following proteolytic cleavage. Its localization suggests a role in the recognition and subsequent activation of the signaling at the first point of contact with invading bacteria. This is Peptidoglycan-recognition protein LE (PGRP-LE) from Drosophila melanogaster (Fruit fly).